The chain runs to 65 residues: uncharacterized protein (65 aa).

This is an uncharacterized protein from Mycobacterium tuberculosis (strain ATCC 25618 / H37Rv).